The sequence spans 68 residues: U4-agatoxin-Ao1a (68 aa).

Positions 1–25 (MKKSTVIVLSLAAFVLLSVMQFSAA) are cleaved as a signal peptide. Residues 26 to 36 (EDIKMEVEEQR) constitute a propeptide that is removed on maturation. 4 disulfide bridges follow: C39-C52, C46-C57, C51-C66, and C59-C64.

Belongs to the neurotoxin 33 family. In terms of tissue distribution, expressed by the venom gland.

It is found in the secreted. The polypeptide is U4-agatoxin-Ao1a (Agelena orientalis (Funnel-web spider)).